The following is a 468-amino-acid chain: 6-phospho-beta-galactosidase (468 aa).

D-galactose 6-phosphate contacts are provided by Q19, H116, N159, E160, and N297. The Proton donor role is filled by E160. Residue E375 is the Nucleophile of the active site. Residues S428, W429, K435, and Y437 each contribute to the D-galactose 6-phosphate site.

The protein belongs to the glycosyl hydrolase 1 family.

The catalysed reaction is a 6-phospho-beta-D-galactoside + H2O = D-galactose 6-phosphate + an alcohol. Its pathway is carbohydrate metabolism; lactose degradation; D-galactose 6-phosphate and beta-D-glucose from lactose 6-phosphate: step 1/1. The polypeptide is 6-phospho-beta-galactosidase (Streptococcus pyogenes serotype M28 (strain MGAS6180)).